Reading from the N-terminus, the 450-residue chain is Tubulin alpha-6 chain (450 aa).

The GTP site is built by glutamine 11, glutamate 71, glycine 144, threonine 145, threonine 179, asparagine 206, and asparagine 228. Residue glutamate 71 participates in Mg(2+) binding. Glutamate 254 is an active-site residue.

This sequence belongs to the tubulin family. Dimer of alpha and beta chains. A typical microtubule is a hollow water-filled tube with an outer diameter of 25 nm and an inner diameter of 15 nM. Alpha-beta heterodimers associate head-to-tail to form protofilaments running lengthwise along the microtubule wall with the beta-tubulin subunit facing the microtubule plus end conferring a structural polarity. Microtubules usually have 13 protofilaments but different protofilament numbers can be found in some organisms and specialized cells. It depends on Mg(2+) as a cofactor. Post-translationally, undergoes a tyrosination/detyrosination cycle, the cyclic removal and re-addition of a C-terminal tyrosine residue by the enzymes tubulin tyrosine carboxypeptidase (TTCP) and tubulin tyrosine ligase (TTL), respectively.

It is found in the cytoplasm. The protein resides in the cytoskeleton. The catalysed reaction is GTP + H2O = GDP + phosphate + H(+). Its function is as follows. Tubulin is the major constituent of microtubules, a cylinder consisting of laterally associated linear protofilaments composed of alpha- and beta-tubulin heterodimers. Microtubules grow by the addition of GTP-tubulin dimers to the microtubule end, where a stabilizing cap forms. Below the cap, tubulin dimers are in GDP-bound state, owing to GTPase activity of alpha-tubulin. The protein is Tubulin alpha-6 chain (TUBA6) of Zea mays (Maize).